The chain runs to 727 residues: UvrABC system protein C (727 aa).

A GIY-YIG domain is found at 16–95 (VDPGVYKFRD…IKEFDPRFNV (80 aa)). The UVR domain maps to 208–243 (DRLVRQLEARMQEASEELDFETAARLRDDVGALRRA). Disordered stretches follow at residues 503–527 (DADQ…QTGR) and 679–727 (SADV…TGVE). Positions 701-711 (NGADIPREPVE) are enriched in basic and acidic residues. A compositionally biased stretch (polar residues) spans 718 to 727 (QSASQRTGVE).

It belongs to the UvrC family. In terms of assembly, interacts with UvrB in an incision complex.

It is found in the cytoplasm. Functionally, the UvrABC repair system catalyzes the recognition and processing of DNA lesions. UvrC both incises the 5' and 3' sides of the lesion. The N-terminal half is responsible for the 3' incision and the C-terminal half is responsible for the 5' incision. The polypeptide is UvrABC system protein C (Rhodococcus jostii (strain RHA1)).